A 138-amino-acid chain; its full sequence is MSTIRVDVVSTEQSIFSVEAKFVALPGESGELGILRGHTPLITRIRPGSVRIEKADDDEEFVFVAGGYLEIQSDHVTVLADTAIRGHDLDEAKAIEAKKRAEEAMQNRGTDFDLALAQSEFAMAAAQLAAIARFRRKK.

This sequence belongs to the ATPase epsilon chain family. As to quaternary structure, F-type ATPases have 2 components, CF(1) - the catalytic core - and CF(0) - the membrane proton channel. CF(1) has five subunits: alpha(3), beta(3), gamma(1), delta(1), epsilon(1). CF(0) has three main subunits: a, b and c.

Its subcellular location is the cell inner membrane. Functionally, produces ATP from ADP in the presence of a proton gradient across the membrane. The polypeptide is ATP synthase epsilon chain (Polynucleobacter necessarius subsp. necessarius (strain STIR1)).